A 310-amino-acid chain; its full sequence is Olfactory receptor 9A2 (310 aa).

Over 1 to 24 (MMDNHSSATEFHLLGFPGSQGLHH) the chain is Extracellular. An N-linked (GlcNAc...) asparagine glycan is attached at Asn-4. Residues 25 to 45 (ILFAIFFFFYLVTLMGNTVII) traverse the membrane as a helical segment. Topologically, residues 46 to 53 (VIVCVDKR) are cytoplasmic. A helical membrane pass occupies residues 54-74 (LQSPMYFFLSHLSTLEILVTT). Residues 75–98 (IIVPMMLWGLLFLGCRQYLSLHVS) are Extracellular-facing. Residues 117–135 (DRYVAVCNPLRYNIIMNSS) lie on the Cytoplasmic side of the membrane. Residues 136–156 (TCIWVVIVSWVFGFLSEIWPI) form a helical membrane-spanning segment. Residues 157-193 (YATFQFTFRKSNSLDHFYCDRGQLLKLSCDNTLLTEF) are Extracellular-facing. The helical transmembrane segment at 194 to 213 (ILFLMAVFILIGSLIPTIVS) threads the bilayer. At 214-233 (YTYIISTILKIPSASGRRKA) the chain is on the cytoplasmic side. Residues 234 to 254 (FSTFASHFTCVVIGYGSCLFL) traverse the membrane as a helical segment. Topologically, residues 255-267 (YVKPKQTQGVEYN) are extracellular. The chain crosses the membrane as a helical span at residues 268–288 (KIVSLLVSVLTPFLNPFIFTL). Residues 289 to 310 (RNDKVKEALRDGMKRCCQLLKD) lie on the Cytoplasmic side of the membrane.

It belongs to the G-protein coupled receptor 1 family.

It is found in the cell membrane. In terms of biological role, odorant receptor. The polypeptide is Olfactory receptor 9A2 (OR9A2) (Homo sapiens (Human)).